We begin with the raw amino-acid sequence, 97 residues long: UPF0250 protein RSc0326 (97 aa).

It belongs to the UPF0250 family.

The polypeptide is UPF0250 protein RSc0326 (Ralstonia nicotianae (strain ATCC BAA-1114 / GMI1000) (Ralstonia solanacearum)).